Here is a 569-residue protein sequence, read N- to C-terminus: Phosphatase and actin regulator 2 (569 aa).

Residues 1–13 (MGQTSVSALSPQP) show a composition bias toward polar residues. Residues 1–47 (MGQTSVSALSPQPGSVDGLDKASIANSDGPPAGSQTPPFKRKGKLST) are disordered. Residue Ser-27 is modified to Phosphoserine. Thr-36 is modified (phosphothreonine). The RPEL 1 repeat unit spans residues 71–96 (AVLERKISTRQSREELIRRGLLKELP). Disordered stretches follow at residues 98-253 (QDGD…TGKP) and 295-483 (PTLP…QEAK). The segment covering 140-151 (GPPREEQAEEKT) has biased composition (basic and acidic residues). The span at 162–176 (GSKASSSPSASSTSS) shows a compositional bias: low complexity. Over residues 212–224 (LSPNTVTSETSSL) the composition is skewed to polar residues. Ser-357 bears the Phosphoserine mark. Residues 386–399 (TDDDDEEDDDDDST) are compositionally biased toward acidic residues. RPEL repeat units follow at residues 412-437 (DTLA…QRTS), 450-475 (TKLV…KQKN), and 488-513 (RRLS…RFNE). Residues 423 to 444 (SKKELEDKNILQRTSEEERQEL) show a composition bias toward basic and acidic residues. Residue Ser-457 is modified to Phosphoserine. A compositionally biased stretch (basic and acidic residues) spans 461–483 (TTEELEQRSILKQKNEEEEQEAK). Phosphoserine is present on Ser-495.

This sequence belongs to the phosphatase and actin regulator family. Binds PPP1CA and actin. As to expression, expressed in the brain with high levels in the cerebellum, specifically in the Purkinje cell layer, choroid plexus and thalamus (ventral, rhomboid and anterior nuclei). Moderate to high expression in the hippocampus, piriform cortex, olfactory bulb, entorhinal cortex, as well as in geniculate bodies, lamboid septal zone, preoptic area and ventral pallidum (at protein level).

The chain is Phosphatase and actin regulator 2 (Phactr2) from Rattus norvegicus (Rat).